A 136-amino-acid polypeptide reads, in one-letter code: Ergosterol biosynthetic protein 28 (136 aa).

Helical transmembrane passes span 18–34 (VVVS…SFLT), 56–72 (FGIW…YCAY), 79–95 (VYFL…FHFL), and 109–125 (GLLS…WFMA).

The protein belongs to the ERG28 family. Heterotetramer of erg25, erg26, erg27 and erg28. Erg28 acts as a scaffold to tether erg27 and other 4,4-demethylation-related enzymes, forming a demethylation enzyme complex, in the endoplasmic reticulum.

Its subcellular location is the endoplasmic reticulum membrane. It functions in the pathway steroid metabolism; ergosterol biosynthesis. In terms of biological role, part of the third module of ergosterol biosynthesis pathway that includes by the late steps of the pathway. Erg28 has a role as a scaffold to help anchor the catalytic components of the C-4 demethylation complex erg25, erg26 and erg27 to the endoplasmic reticulum. The third module or late pathway involves the ergosterol synthesis itself through consecutive reactions that mainly occur in the endoplasmic reticulum (ER) membrane. Firstly, the squalene synthase erg9 catalyzes the condensation of 2 farnesyl pyrophosphate moieties to form squalene, which is the precursor of all steroids. Secondly, squalene is converted into lanosterol by the consecutive action of the squalene epoxidase erg1 and the lanosterol synthase erg7. The lanosterol 14-alpha-demethylase erg11/cyp1 catalyzes C14-demethylation of lanosterol to produce 4,4'-dimethyl cholesta-8,14,24-triene-3-beta-ol. In the next steps, a complex process involving various demethylation, reduction and desaturation reactions catalyzed by the C-14 reductase erg24 and the C-4 demethylation complex erg25-erg26-erg27 leads to the production of zymosterol. Erg28 likely functions in the C-4 demethylation complex reaction by tethering erg26 and Erg27 to the endoplasmic reticulum or to facilitate interaction between these proteins. Then, the sterol 24-C-methyltransferase erg6 catalyzes the methyl transfer from S-adenosyl-methionine to the C-24 of zymosterol to form fecosterol. The C-8 sterol isomerase erg2 catalyzes the reaction which results in unsaturation at C-7 in the B ring of sterols and thus converts fecosterol to episterol. The sterol-C5-desaturases erg31 and erg32 then catalyze the introduction of a C-5 double bond in the B ring to produce 5-dehydroepisterol. The C-22 sterol desaturase erg5 further converts 5-dehydroepisterol into ergosta-5,7,22,24(28)-tetraen-3beta-ol by forming the C-22(23) double bond in the sterol side chain. Finally, ergosta-5,7,22,24(28)-tetraen-3beta-ol is substrate of the C-24(28) sterol reductase erg4 to produce ergosterol. In the genus Schizosaccharomyces, a second route exists between lanosterol and fecosterol, via the methylation of lanosterol to eburicol by erg6, followed by C14-demethylation by erg11/cyp1 and C4-demethylation by the demethylation complex erg25-erg26-erg27. Extends the chronological lifespan when overexpressed. The sequence is that of Ergosterol biosynthetic protein 28 from Schizosaccharomyces pombe (strain 972 / ATCC 24843) (Fission yeast).